Reading from the N-terminus, the 384-residue chain is 5-amino-6-(D-ribitylamino)uracil--L-tyrosine 4-hydroxyphenyl transferase 2 (384 aa).

One can recognise a Radical SAM core domain in the interval 53–286 (VSYVVNRNIY…IAISRVILHT (234 aa)). Residues cysteine 67, cysteine 71, and cysteine 74 each coordinate [4Fe-4S] cluster.

It belongs to the radical SAM superfamily. CofH family. Consists of two subunits, CofG and CofH. [4Fe-4S] cluster serves as cofactor.

It carries out the reaction 5-amino-6-(D-ribitylamino)uracil + L-tyrosine + S-adenosyl-L-methionine = 5-amino-5-(4-hydroxybenzyl)-6-(D-ribitylimino)-5,6-dihydrouracil + 2-iminoacetate + 5'-deoxyadenosine + L-methionine + H(+). The protein operates within cofactor biosynthesis; coenzyme F0 biosynthesis. Functionally, catalyzes the radical-mediated synthesis of 5-amino-5-(4-hydroxybenzyl)-6-(D-ribitylimino)-5,6-dihydrouracil from 5-amino-6-(D-ribitylamino)uracil and L-tyrosine. This Methanosarcina mazei (strain ATCC BAA-159 / DSM 3647 / Goe1 / Go1 / JCM 11833 / OCM 88) (Methanosarcina frisia) protein is 5-amino-6-(D-ribitylamino)uracil--L-tyrosine 4-hydroxyphenyl transferase 2.